A 259-amino-acid polypeptide reads, in one-letter code: MNTQTAPSPQFYLTAPAACPYLPGQMERKVFTHMVGERAPELNDLLTQGGFRRSQNIAYRPACETCRACISVRILANEFAPTKSMRRVLAANGDIVSAEYPAEPSSEQYNLFRRYLDCRHQKGGMSDMSVLDYAMMVEDTHVHTKIIEYRLRVEGDGINDKARGPLIATALTDRMSDGLSMVYSFFDPALSERSLGTYMILDHIRRAKERGLPHVYLGYWVKGSRKMGYKTKFLPQEHLMARGWERYSVDHDSIKPATD.

Belongs to the R-transferase family. Bpt subfamily.

The protein localises to the cytoplasm. The catalysed reaction is N-terminal L-glutamyl-[protein] + L-leucyl-tRNA(Leu) = N-terminal L-leucyl-L-glutamyl-[protein] + tRNA(Leu) + H(+). The enzyme catalyses N-terminal L-aspartyl-[protein] + L-leucyl-tRNA(Leu) = N-terminal L-leucyl-L-aspartyl-[protein] + tRNA(Leu) + H(+). Functions in the N-end rule pathway of protein degradation where it conjugates Leu from its aminoacyl-tRNA to the N-termini of proteins containing an N-terminal aspartate or glutamate. The protein is Aspartate/glutamate leucyltransferase of Sinorhizobium medicae (strain WSM419) (Ensifer medicae).